Reading from the N-terminus, the 59-residue chain is Ribosome biogenesis protein Nop10 (59 aa).

Belongs to the NOP10 family.

Involved in ribosome biogenesis; more specifically in 18S rRNA pseudouridylation and in cleavage of pre-rRNA. The polypeptide is Ribosome biogenesis protein Nop10 (Thermococcus gammatolerans (strain DSM 15229 / JCM 11827 / EJ3)).